Reading from the N-terminus, the 154-residue chain is MRAVIQRAKSGSVTVDSKIVSQISHGLVVLIGVGHEDTAEDVEKVANKIIKTKLWPSVDGAQQWKQSVLDVGGEVLCVSQFTLFAKVKKGQKPDFHNAAKGPQAKELYDQVLAKIQAALPEGRTVKDGVFGAMMDVALVNDGPVTIQYDTKNDK.

A Gly-cisPro motif, important for rejection of L-amino acids motif is present at residues glycine 142–proline 143.

This sequence belongs to the DTD family. As to quaternary structure, homodimer.

It localises to the cytoplasm. It catalyses the reaction glycyl-tRNA(Ala) + H2O = tRNA(Ala) + glycine + H(+). The enzyme catalyses a D-aminoacyl-tRNA + H2O = a tRNA + a D-alpha-amino acid + H(+). Its function is as follows. An aminoacyl-tRNA editing enzyme that deacylates mischarged D-aminoacyl-tRNAs. Also deacylates mischarged glycyl-tRNA(Ala), protecting cells against glycine mischarging by AlaRS. Acts via tRNA-based rather than protein-based catalysis; rejects L-amino acids rather than detecting D-amino acids in the active site. By recycling D-aminoacyl-tRNA to D-amino acids and free tRNA molecules, this enzyme counteracts the toxicity associated with the formation of D-aminoacyl-tRNA entities in vivo and helps enforce protein L-homochirality. This is D-aminoacyl-tRNA deacylase (DTD1) from Yarrowia lipolytica (strain CLIB 122 / E 150) (Yeast).